A 580-amino-acid chain; its full sequence is Dihydroxy-acid dehydratase (580 aa).

Residues 1 to 31 form a disordered region; it reads MPSGSSESPADALRASDSTPDIKPRSRDVTD. Positions 20 to 31 are enriched in basic and acidic residues; it reads PDIKPRSRDVTD. C69 is a binding site for [2Fe-2S] cluster. A Mg(2+)-binding site is contributed by D101. C142 provides a ligand contact to [2Fe-2S] cluster. Mg(2+) is bound by residues D143 and K144. An N6-carboxylysine modification is found at K144. C219 contacts [2Fe-2S] cluster. E470 provides a ligand contact to Mg(2+). S496 functions as the Proton acceptor in the catalytic mechanism.

Belongs to the IlvD/Edd family. In terms of assembly, homodimer. Requires [2Fe-2S] cluster as cofactor. It depends on Mg(2+) as a cofactor.

The catalysed reaction is (2R)-2,3-dihydroxy-3-methylbutanoate = 3-methyl-2-oxobutanoate + H2O. It catalyses the reaction (2R,3R)-2,3-dihydroxy-3-methylpentanoate = (S)-3-methyl-2-oxopentanoate + H2O. The protein operates within amino-acid biosynthesis; L-isoleucine biosynthesis; L-isoleucine from 2-oxobutanoate: step 3/4. It participates in amino-acid biosynthesis; L-valine biosynthesis; L-valine from pyruvate: step 3/4. In terms of biological role, functions in the biosynthesis of branched-chain amino acids. Catalyzes the dehydration of (2R,3R)-2,3-dihydroxy-3-methylpentanoate (2,3-dihydroxy-3-methylvalerate) into 2-oxo-3-methylpentanoate (2-oxo-3-methylvalerate) and of (2R)-2,3-dihydroxy-3-methylbutanoate (2,3-dihydroxyisovalerate) into 2-oxo-3-methylbutanoate (2-oxoisovalerate), the penultimate precursor to L-isoleucine and L-valine, respectively. This chain is Dihydroxy-acid dehydratase, found in Mycobacterium sp. (strain JLS).